We begin with the raw amino-acid sequence, 711 residues long: Ribosomal RNA large subunit methyltransferase K/L (711 aa).

Residues 43–154 (TLYRTLLWSR…RENLVISLDL (112 aa)) enclose the THUMP domain.

Belongs to the methyltransferase superfamily. RlmKL family.

Its subcellular location is the cytoplasm. It carries out the reaction guanosine(2445) in 23S rRNA + S-adenosyl-L-methionine = N(2)-methylguanosine(2445) in 23S rRNA + S-adenosyl-L-homocysteine + H(+). The catalysed reaction is guanosine(2069) in 23S rRNA + S-adenosyl-L-methionine = N(2)-methylguanosine(2069) in 23S rRNA + S-adenosyl-L-homocysteine + H(+). In terms of biological role, specifically methylates the guanine in position 2445 (m2G2445) and the guanine in position 2069 (m7G2069) of 23S rRNA. The chain is Ribosomal RNA large subunit methyltransferase K/L from Haemophilus influenzae (strain PittGG).